We begin with the raw amino-acid sequence, 386 residues long: N-acetylneuraminate epimerase (386 aa).

Positions 1–29 (MGMQMKNSKKMMTLMALCLSVAITTSGYA) are cleaved as a signal peptide. Kelch repeat units lie at residues 51-95 (VIYV…VFLN), 97-149 (ELYV…VKLN), 151-186 (TMALITGGVNEHIFDKYFIDIAAAAGDDSEKNRVIY), 187-232 (NYFN…AMEN), 235-284 (LTLI…LAGA), 306-355 (QNYT…NYGD), and 357-386 (IFLIGGENAKGKPVSSVISFAMHDGKLLIE). Catalysis depends on Glu241, which acts as the Proton acceptor.

Belongs to the NanM family. Homodimer.

It localises to the periplasm. It carries out the reaction N-acetyl-alpha-neuraminate = N-acetyl-beta-neuraminate. Its function is as follows. Converts alpha-N-acetylneuranimic acid (Neu5Ac) to the beta-anomer, accelerating the equilibrium between the alpha- and beta-anomers. Probably facilitates sialidase-negative bacteria to compete successfully for limited amounts of extracellular Neu5Ac, which is likely taken up in the beta-anomer. In addition, the rapid removal of sialic acid from solution might be advantageous to the bacterium to damp down host responses. In Salmonella arizonae (strain ATCC BAA-731 / CDC346-86 / RSK2980), this protein is N-acetylneuraminate epimerase.